We begin with the raw amino-acid sequence, 292 residues long: Phosphatidylglycerol--prolipoprotein diacylglyceryl transferase (292 aa).

Helical transmembrane passes span 18–38 (LFGATFALRWYALAYIAGLLI), 67–87 (LLTWVILGVILGGRLGFVLFY), 105–125 (GGMSFHGGFLGVMVAVIAFCL), and 129–149 (ISILPVADLLAAATPPGLFLG). Arg-150 is an a 1,2-diacyl-sn-glycero-3-phospho-(1'-sn-glycerol) binding site. 3 helical membrane-spanning segments follow: residues 193–213 (QLYEAALEGIVLFAILAILIW), 222–242 (GAVTGAFLAGYGCARFLVEFV), and 266–286 (GLTMGQILSLPMILLGLYFML).

The protein belongs to the Lgt family.

It is found in the cell inner membrane. It carries out the reaction L-cysteinyl-[prolipoprotein] + a 1,2-diacyl-sn-glycero-3-phospho-(1'-sn-glycerol) = an S-1,2-diacyl-sn-glyceryl-L-cysteinyl-[prolipoprotein] + sn-glycerol 1-phosphate + H(+). Its pathway is protein modification; lipoprotein biosynthesis (diacylglyceryl transfer). Its function is as follows. Catalyzes the transfer of the diacylglyceryl group from phosphatidylglycerol to the sulfhydryl group of the N-terminal cysteine of a prolipoprotein, the first step in the formation of mature lipoproteins. The polypeptide is Phosphatidylglycerol--prolipoprotein diacylglyceryl transferase (Cereibacter sphaeroides (strain ATCC 17025 / ATH 2.4.3) (Rhodobacter sphaeroides)).